A 212-amino-acid chain; its full sequence is Noggin-2 (212 aa).

The first 23 residues, 1-23, serve as a signal peptide directing secretion; sequence MGSITRALPLLLLLLLCAHGTAS. A disordered region spans residues 37 to 56; that stretch reads LPVPDLIENPDPEHDPREQD. Residues 47–56 are compositionally biased toward basic and acidic residues; that stretch reads DPEHDPREQD. An N-linked (GlcNAc...) asparagine glycan is attached at N84.

The protein belongs to the noggin family. In terms of assembly, homodimer; disulfide-linked.

The protein resides in the secreted. Functionally, inhibitor of bone morphogenetic proteins (BMP) signaling. The polypeptide is Noggin-2 (nog2) (Danio rerio (Zebrafish)).